Here is a 131-residue protein sequence, read N- to C-terminus: Profilin-2 (131 aa).

Residues C13 and C115 are joined by a disulfide bond. Residues 81–97 (AVIRGKKGPGGVTVKKT) carry the Involved in PIP2 interaction motif. Position 111 is a phosphothreonine (T111).

It belongs to the profilin family. Multimer. Occurs in many kinds of cells as a complex with monomeric actin in a 1:1 ratio. In terms of processing, phosphorylated by MAP kinases.

It is found in the cytoplasm. It localises to the cytoskeleton. Its function is as follows. Binds to actin and affects the structure of the cytoskeleton. At high concentrations, profilin prevents the polymerization of actin, whereas it enhances it at low concentrations. By binding to PIP2, it inhibits the formation of IP3 and DG. The protein is Profilin-2 of Hevea brasiliensis (Para rubber tree).